Here is a 436-residue protein sequence, read N- to C-terminus: GTPase Der (436 aa).

EngA-type G domains lie at 4–167 and 175–351; these read PTIA…PNEE and IKFS…QSQN. GTP-binding positions include 10–17, 57–61, 119–122, 181–188, 229–233, and 294–297; these read GRPNVGKS, DTGGI, NKVD, DTAGM, and NKWD. A KH-like domain is found at 352–436; the sequence is TRIPSAVLND…PIHLIARKRK (85 aa).

Belongs to the TRAFAC class TrmE-Era-EngA-EngB-Septin-like GTPase superfamily. EngA (Der) GTPase family. Associates with the 50S ribosomal subunit.

GTPase that plays an essential role in the late steps of ribosome biogenesis. This Streptococcus sanguinis (strain SK36) protein is GTPase Der.